A 311-amino-acid chain; its full sequence is tRNA-cytidine(32) 2-sulfurtransferase (311 aa).

Positions 47–52 (SGGKDS) match the PP-loop motif motif. Residues Cys122, Cys125, and Cys213 each coordinate [4Fe-4S] cluster.

Belongs to the TtcA family. Homodimer. It depends on Mg(2+) as a cofactor. The cofactor is [4Fe-4S] cluster.

Its subcellular location is the cytoplasm. It carries out the reaction cytidine(32) in tRNA + S-sulfanyl-L-cysteinyl-[cysteine desulfurase] + AH2 + ATP = 2-thiocytidine(32) in tRNA + L-cysteinyl-[cysteine desulfurase] + A + AMP + diphosphate + H(+). It participates in tRNA modification. Its function is as follows. Catalyzes the ATP-dependent 2-thiolation of cytidine in position 32 of tRNA, to form 2-thiocytidine (s(2)C32). The sulfur atoms are provided by the cysteine/cysteine desulfurase (IscS) system. This is tRNA-cytidine(32) 2-sulfurtransferase from Escherichia coli O45:K1 (strain S88 / ExPEC).